Reading from the N-terminus, the 351-residue chain is UDP-3-O-acylglucosamine N-acyltransferase (351 aa).

H257 functions as the Proton acceptor in the catalytic mechanism.

The protein belongs to the transferase hexapeptide repeat family. LpxD subfamily. In terms of assembly, homotrimer.

It carries out the reaction a UDP-3-O-[(3R)-3-hydroxyacyl]-alpha-D-glucosamine + a (3R)-hydroxyacyl-[ACP] = a UDP-2-N,3-O-bis[(3R)-3-hydroxyacyl]-alpha-D-glucosamine + holo-[ACP] + H(+). It functions in the pathway bacterial outer membrane biogenesis; LPS lipid A biosynthesis. Its function is as follows. Catalyzes the N-acylation of UDP-3-O-acylglucosamine using 3-hydroxyacyl-ACP as the acyl donor. Is involved in the biosynthesis of lipid A, a phosphorylated glycolipid that anchors the lipopolysaccharide to the outer membrane of the cell. In Brucella abortus (strain S19), this protein is UDP-3-O-acylglucosamine N-acyltransferase.